The chain runs to 137 residues: Photosystem II reaction center W protein, chloroplastic (137 aa).

Residues 1 to 64 constitute a chloroplast transit peptide; the sequence is MATITASSSA…ETTTTTNKSM (64 aa). The N-terminal 19 residues, 65 to 83, are a transit peptide targeting the thylakoid; the sequence is GASLLAAAAAATISNPAMA. Topologically, residues 84-103 are lumenal, thylakoid; that stretch reads LVDERMSTEGTGLPFGLSNN. A helical membrane pass occupies residues 104-123; it reads LLGWILFGVFGLIWALYFVY. The Stromal segment spans residues 124-137; that stretch reads ASGLEEDEESGLSL.

As to quaternary structure, part of the photosystem II complex. PSII is composed of 1 copy each of membrane proteins PsbA, PsbB, PsbC, PsbD, numerous small proteins, at least 3 peripheral proteins of the oxygen-evolving complex and a large number of cofactors. It forms dimeric complexes.

It localises to the plastid. Its subcellular location is the chloroplast thylakoid membrane. Stabilizes dimeric photosystem II (PSII). In its absence no dimeric PSII accumulates and there is a reduction of monomeric PSII. This chain is Photosystem II reaction center W protein, chloroplastic, found in Spinacia oleracea (Spinach).